A 106-amino-acid polypeptide reads, in one-letter code: MTASIAQQKIRIRLKAFDRRMLDLSCEKIIQTADTTSASAIGPIPLPTKRKIYCVLRSPHVDKDSREHFETRTHRRLIDIYSPSAKTIDALMKLDLPSGVDIEVKL.

It belongs to the universal ribosomal protein uS10 family. As to quaternary structure, part of the 30S ribosomal subunit.

Its function is as follows. Involved in the binding of tRNA to the ribosomes. The chain is Small ribosomal subunit protein uS10 from Prochlorococcus marinus (strain MIT 9312).